The following is a 388-amino-acid chain: Methylthioribose-1-phosphate isomerase (388 aa).

Catalysis depends on D258, which acts as the Proton donor.

Belongs to the eIF-2B alpha/beta/delta subunits family. MtnA subfamily.

It is found in the cytoplasm. It localises to the nucleus. The enzyme catalyses 5-(methylsulfanyl)-alpha-D-ribose 1-phosphate = 5-(methylsulfanyl)-D-ribulose 1-phosphate. The protein operates within amino-acid biosynthesis; L-methionine biosynthesis via salvage pathway; L-methionine from S-methyl-5-thio-alpha-D-ribose 1-phosphate: step 1/6. Catalyzes the interconversion of methylthioribose-1-phosphate (MTR-1-P) into methylthioribulose-1-phosphate (MTRu-1-P). This chain is Methylthioribose-1-phosphate isomerase, found in Sordaria macrospora (strain ATCC MYA-333 / DSM 997 / K(L3346) / K-hell).